Reading from the N-terminus, the 360-residue chain is Ribosomal RNA large subunit methyltransferase M (360 aa).

Residues Ser187, 220-223, Asp239, Asp259, and Asp276 contribute to the S-adenosyl-L-methionine site; that span reads CPGG. Catalysis depends on Lys305, which acts as the Proton acceptor.

It belongs to the class I-like SAM-binding methyltransferase superfamily. RNA methyltransferase RlmE family. RlmM subfamily. Monomer.

It localises to the cytoplasm. The catalysed reaction is cytidine(2498) in 23S rRNA + S-adenosyl-L-methionine = 2'-O-methylcytidine(2498) in 23S rRNA + S-adenosyl-L-homocysteine + H(+). Functionally, catalyzes the 2'-O-methylation at nucleotide C2498 in 23S rRNA. This chain is Ribosomal RNA large subunit methyltransferase M, found in Shewanella halifaxensis (strain HAW-EB4).